The sequence spans 199 residues: MARTWLLLFLGLRCQALPSGIAGTPFPSLAPPVTLLVDGRRHTLVVCLVLDAAPPGLDSLVWFSGGNGSALDAFTYGPSPAPDGTWTSLGQLSLSSEELEAWEPLVCHTRPAAGGLNRSTHPLQLSGEEASTDRTCPQETLRGTQRQVLRLSVLRLLLFKLLLLDVFLTCSRLCVLAGQHLLPPPSSKQAPASTHQSWT.

The N-terminal stretch at 1-16 (MARTWLLLFLGLRCQA) is a signal peptide. Over 17–155 (LPSGIAGTPF…RQVLRLSVLR (139 aa)) the chain is Extracellular. An intrachain disulfide couples Cys47 to Cys107. N-linked (GlcNAc...) asparagine glycosylation is found at Asn67 and Asn117. A disordered region spans residues 117-139 (NRSTHPLQLSGEEASTDRTCPQE). A helical membrane pass occupies residues 156–176 (LLLFKLLLLDVFLTCSRLCVL). Residues 177 to 199 (AGQHLLPPPSSKQAPASTHQSWT) lie on the Cytoplasmic side of the membrane.

As to quaternary structure, heterodimer with TCRB; disulfide linked. This heterodimer assembles with CD3 proteins into a signaling-competent pre-T-cell receptor complex. Interacts with RHBDD1. Found in CD45+ but not in the CD45- fetal liver cells.

The protein localises to the membrane. It is found in the cell membrane. In terms of biological role, component of the pre-T-cell receptor complex (composed of PTCRA, TCRB and the CD3 complex) that has a crucial role in early T-cell development, particularly alpha-beta T cell differentiation. This is Pre T-cell antigen receptor alpha from Rattus norvegicus (Rat).